The sequence spans 107 residues: DNA polymerase delta subunit 4 (107 aa).

The PCNA-interaction protein motif (PIP box) motif lies at 1 to 16 (MGRKRFITDSYPVVKK). Residues 1–40 (MGRKRFITDSYPVVKKREGPPGHSKGELAPELGEDTQSLS) form a disordered region. The span at 15-28 (KKREGPPGHSKGEL) shows a compositional bias: basic and acidic residues.

This sequence belongs to the DNA polymerase delta subunit 4 family. Component of the tetrameric DNA polymerase delta complex (Pol-delta4), which consists of POLD1/p125, POLD2/p50, POLD3/p66/p68 and POLD4/p12, with POLD1 bearing DNA polymerase and 3' to 5' proofreading exonuclease activities. Within this complex, directly interacts with POLD1 and POLD2. Directly interacts with PCNA, as do POLD1 and POLD3; this interaction stimulates Pol-delta4 polymerase activity. As POLD1 and POLD2, directly interacts with WRNIP1; this interaction stimulates DNA polymerase delta-mediated DNA synthesis, independently of the presence of PCNA, possibly by increasing initiation frequency. Upon genotoxic stress induced by DNA damaging agents or by replication stress, POLD4 is proteolytically degraded and Pol-delta4 is converted into a trimeric form of the complex (Pol-delta3) that has an increased proofreading activity. The DNA polymerase delta complex interacts with POLDIP2; this interaction is probably mediated through direct binding to POLD2. Post-translationally, ubiquitinated; undergoes 'Lys-48'-linked polyubiquitination in response to UV irradiation or treatment with an alkylating agent, leading to proteasomal degradation. This modification is mediated, at least in part, by RNF8. In terms of processing, ubiquitinated; undergoes 'Lys-48'-linked ubiquitination in response to UV irradiation, leading to proteasomal degradation. This modification is partly mediated by RNF8 and by the DCX(DTL) E3 ubiquitin ligase complex (also called CRL4(CDT2)). Efficient degradation requires the presence of PCNA and is required for the inhibition of fork progression after DNA damage.

Its subcellular location is the nucleus. As a component of the tetrameric DNA polymerase delta complex (Pol-delta4), plays a role in high fidelity genome replication and repair. Within this complex, increases the rate of DNA synthesis and decreases fidelity by regulating POLD1 polymerase and proofreading 3' to 5' exonuclease activity. Pol-delta4 participates in Okazaki fragment processing, through both the short flap pathway, as well as a nick translation system. Under conditions of DNA replication stress, required for the repair of broken replication forks through break-induced replication (BIR), a mechanism that may induce segmental genomic duplications of up to 200 kb. Involved in Pol-delta4 translesion synthesis (TLS) of templates carrying O6-methylguanine or abasic sites. Its degradation in response to DNA damage is required for the inhibition of fork progression and cell survival. The sequence is that of DNA polymerase delta subunit 4 (Pold4) from Mus musculus (Mouse).